Consider the following 608-residue polypeptide: Phosphogluconate dehydratase (608 aa).

2 residues coordinate [4Fe-4S] cluster: cysteine 154 and cysteine 221.

The protein belongs to the IlvD/Edd family. It depends on [4Fe-4S] cluster as a cofactor.

The enzyme catalyses 6-phospho-D-gluconate = 2-dehydro-3-deoxy-6-phospho-D-gluconate + H2O. Its pathway is carbohydrate metabolism; Entner-Doudoroff pathway. Catalyzes the dehydration of 6-phospho-D-gluconate to 2-dehydro-3-deoxy-6-phospho-D-gluconate. The polypeptide is Phosphogluconate dehydratase (Pseudomonas aeruginosa (strain ATCC 15692 / DSM 22644 / CIP 104116 / JCM 14847 / LMG 12228 / 1C / PRS 101 / PAO1)).